Reading from the N-terminus, the 403-residue chain is Argininosuccinate synthase (403 aa).

Residues 13–21 and Ala40 contribute to the ATP site; that span reads AYSGGLDTS. L-citrulline is bound by residues Tyr92 and Ser97. Residue Gly122 coordinates ATP. L-aspartate is bound by residues Thr124, Asn128, and Asp129. Residue Asn128 coordinates L-citrulline. L-citrulline-binding residues include Arg132, Ser181, Ser190, Glu266, and Tyr278.

This sequence belongs to the argininosuccinate synthase family. Type 1 subfamily. Homotetramer.

Its subcellular location is the cytoplasm. The enzyme catalyses L-citrulline + L-aspartate + ATP = 2-(N(omega)-L-arginino)succinate + AMP + diphosphate + H(+). Its pathway is amino-acid biosynthesis; L-arginine biosynthesis; L-arginine from L-ornithine and carbamoyl phosphate: step 2/3. This Aliivibrio fischeri (strain ATCC 700601 / ES114) (Vibrio fischeri) protein is Argininosuccinate synthase.